We begin with the raw amino-acid sequence, 428 residues long: UPF0597 protein Dde_0807 (428 aa).

The protein belongs to the UPF0597 family.

The sequence is that of UPF0597 protein Dde_0807 from Oleidesulfovibrio alaskensis (strain ATCC BAA-1058 / DSM 17464 / G20) (Desulfovibrio alaskensis).